The following is a 676-amino-acid chain: DNA-directed RNA polymerase subunit beta' (676 aa).

Zn(2+) contacts are provided by cysteine 69, cysteine 71, cysteine 87, and cysteine 90. Positions 489, 491, and 493 each coordinate Mg(2+).

It belongs to the RNA polymerase beta' chain family. RpoC1 subfamily. As to quaternary structure, in plastids the minimal PEP RNA polymerase catalytic core is composed of four subunits: alpha, beta, beta', and beta''. When a (nuclear-encoded) sigma factor is associated with the core the holoenzyme is formed, which can initiate transcription. Mg(2+) is required as a cofactor. Zn(2+) serves as cofactor.

The protein localises to the plastid. It is found in the chloroplast. The enzyme catalyses RNA(n) + a ribonucleoside 5'-triphosphate = RNA(n+1) + diphosphate. Its function is as follows. DNA-dependent RNA polymerase catalyzes the transcription of DNA into RNA using the four ribonucleoside triphosphates as substrates. This is DNA-directed RNA polymerase subunit beta' from Lolium perenne (Perennial ryegrass).